The chain runs to 267 residues: Tryptophan synthase alpha chain (267 aa).

Active-site proton acceptor residues include Glu-47 and Asp-58.

It belongs to the TrpA family. Tetramer of two alpha and two beta chains.

The catalysed reaction is (1S,2R)-1-C-(indol-3-yl)glycerol 3-phosphate + L-serine = D-glyceraldehyde 3-phosphate + L-tryptophan + H2O. Its pathway is amino-acid biosynthesis; L-tryptophan biosynthesis; L-tryptophan from chorismate: step 5/5. In terms of biological role, the alpha subunit is responsible for the aldol cleavage of indoleglycerol phosphate to indole and glyceraldehyde 3-phosphate. The chain is Tryptophan synthase alpha chain from Pelodictyon phaeoclathratiforme (strain DSM 5477 / BU-1).